The following is a 538-amino-acid chain: NAD(P)H-quinone oxidoreductase chain 4 1 (538 aa).

13 consecutive transmembrane segments (helical) span residues 7-27 (FPWLTAIIALPLVAALAIPII), 37-57 (WYGLGVAFADFALMIAAFWHY), 88-108 (LSMPLLLLTGLINTLAIFAAW), 116-136 (LFYGLMLVMYSAQLGVFVAQD), 137-157 (LLLFFLMWEIELVPVYLLISI), 170-190 (FILYTAAASIFILVAGFALAF), 210-230 (AIELLAYAGFLIAFGVKLPIF), 244-264 (SAPGSMILAGVLLKMGGYALI), 278-298 (FAPVLAILGVVNIVYGACCAF), 315-335 (MGFVLIGLASYTEIGVSGAVL), 336-356 (QMVSHGLVAASLFFLTGVTYE), 388-408 (LALPGMSGFVGELMVFIGIAT), and 418-438 (VVVVLLSAVGVILTPIYLLSM).

It belongs to the complex I subunit 4 family.

It localises to the cellular thylakoid membrane. The enzyme catalyses a plastoquinone + NADH + (n+1) H(+)(in) = a plastoquinol + NAD(+) + n H(+)(out). The catalysed reaction is a plastoquinone + NADPH + (n+1) H(+)(in) = a plastoquinol + NADP(+) + n H(+)(out). In terms of biological role, NDH-1 shuttles electrons from NAD(P)H, via FMN and iron-sulfur (Fe-S) centers, to quinones in the respiratory chain. The immediate electron acceptor for the enzyme in this species is believed to be plastoquinone. Couples the redox reaction to proton translocation (for every two electrons transferred, four hydrogen ions are translocated across the cytoplasmic membrane), and thus conserves the redox energy in a proton gradient. The sequence is that of NAD(P)H-quinone oxidoreductase chain 4 1 from Nostoc sp. (strain PCC 7120 / SAG 25.82 / UTEX 2576).